We begin with the raw amino-acid sequence, 136 residues long: Serine--glyoxylate aminotransferase (136 aa).

The protein belongs to the class-V pyridoxal-phosphate-dependent aminotransferase family. As to quaternary structure, homodimer. The cofactor is pyridoxal 5'-phosphate. In terms of tissue distribution, expressed in leaves but not in root tissue or seedlings.

The protein resides in the peroxisome. It catalyses the reaction glyoxylate + L-serine = 3-hydroxypyruvate + glycine. The catalysed reaction is glyoxylate + L-alanine = glycine + pyruvate. With respect to regulation, inhibited by aminooxyacetate. The polypeptide is Serine--glyoxylate aminotransferase (Zea mays (Maize)).